Here is a 323-residue protein sequence, read N- to C-terminus: MQIALAPMEGLVDNILRDVLTRVGGIDWCVTEFIRVCDRLLPASSFDKLAPELRQGARTAAGVPMRVQLLGSDPVCLAENAALACELGAPVIDLNFGCPAKTVNKSRGGAVLLKEPELLHAIVREVRRAVPANIPVTSKMRLGFDSPDGALECATALAEGGSAHLVVHARTKVEGYKPPAHWEWVARVQDVVKVPVFANGEIWTVDDWRRCREVSGAEDIMLGRGLVSRPDLGLQIAAARDGRDYQPMSWHDLLPLLREFWRQAQAKLSPRYAPGRMKQWLAMLTRSYPEAVVLFAELRREDDCARISRLLGVEAQVLEACVA.

FMN contacts are provided by residues 7-9 (PME) and Q68. The active-site Proton donor is C98. FMN-binding positions include K139, 199–201 (NGE), and 223–224 (GR).

Belongs to the Dus family. DusC subfamily. Requires FMN as cofactor.

It catalyses the reaction 5,6-dihydrouridine(16) in tRNA + NADP(+) = uridine(16) in tRNA + NADPH + H(+). The enzyme catalyses 5,6-dihydrouridine(16) in tRNA + NAD(+) = uridine(16) in tRNA + NADH + H(+). Its function is as follows. Catalyzes the synthesis of 5,6-dihydrouridine (D), a modified base found in the D-loop of most tRNAs, via the reduction of the C5-C6 double bond in target uridines. Specifically modifies U16 in tRNAs. This Pseudomonas putida (strain ATCC 47054 / DSM 6125 / CFBP 8728 / NCIMB 11950 / KT2440) protein is tRNA-dihydrouridine(16) synthase.